A 481-amino-acid chain; its full sequence is MTHKERPLDVVILAAGQGTRMKSALPKVLHPVAGRPMVAWAVKAAKALGARDIVVVTGHGAEQVEAALAGSGVRFARQAQQLGTGNAFLVGAEALRHQGDADILVLYGDTPLLRPETLRALLADHRAHNSALTILTAELPDATGYGRILRDADGHVERIVEEKAATPEEKAVREFNSGVYVLDARAPELARRITNDNPAGEYYLTDLLELYRQEGAQVRAFKLHDPDEVMGANDRVQLAQAAAVLRRRINTAHMQAGVTLQDPSTIQIEDTVTLGRDVTLEPGVILRGQTRVADGVTIGAYSVVTDSVLEEGVIVKPHSVLEGAHVGKGSDVGPFARLRPGTVLEESVHIGNFVETKNARLAEGVKAGHLAYLGDVTIGAETNVGAGTIIANFDGVHKHQSTVGAGVFIGSNATLIAPRVIGDAAFIAAGSAVHADVPEGALAIARGKQRTLEGWSRRYWSGMHEGVRKKLPWLAGWLERQ.

Residues 1-235 (MTHKERPLDV…PDEVMGANDR (235 aa)) are pyrophosphorylase. Residues 13-16 (LAAG), Lys-27, Gln-78, 83-84 (GT), 107-109 (YGD), Gly-146, Glu-161, Asn-176, and Asn-233 contribute to the UDP-N-acetyl-alpha-D-glucosamine site. Residue Asp-109 participates in Mg(2+) binding. Residue Asn-233 participates in Mg(2+) binding. A linker region spans residues 236–256 (VQLAQAAAVLRRRINTAHMQA). The tract at residues 257 to 481 (GVTLQDPSTI…PWLAGWLERQ (225 aa)) is N-acetyltransferase. UDP-N-acetyl-alpha-D-glucosamine contacts are provided by Arg-339 and Lys-357. Catalysis depends on His-369, which acts as the Proton acceptor. Positions 372 and 383 each coordinate UDP-N-acetyl-alpha-D-glucosamine. Positions 386, 411, 429, and 446 each coordinate acetyl-CoA.

In the N-terminal section; belongs to the N-acetylglucosamine-1-phosphate uridyltransferase family. It in the C-terminal section; belongs to the transferase hexapeptide repeat family. Homotrimer. It depends on Mg(2+) as a cofactor.

The protein localises to the cytoplasm. It carries out the reaction alpha-D-glucosamine 1-phosphate + acetyl-CoA = N-acetyl-alpha-D-glucosamine 1-phosphate + CoA + H(+). It catalyses the reaction N-acetyl-alpha-D-glucosamine 1-phosphate + UTP + H(+) = UDP-N-acetyl-alpha-D-glucosamine + diphosphate. It participates in nucleotide-sugar biosynthesis; UDP-N-acetyl-alpha-D-glucosamine biosynthesis; N-acetyl-alpha-D-glucosamine 1-phosphate from alpha-D-glucosamine 6-phosphate (route II): step 2/2. It functions in the pathway nucleotide-sugar biosynthesis; UDP-N-acetyl-alpha-D-glucosamine biosynthesis; UDP-N-acetyl-alpha-D-glucosamine from N-acetyl-alpha-D-glucosamine 1-phosphate: step 1/1. The protein operates within bacterial outer membrane biogenesis; LPS lipid A biosynthesis. Its function is as follows. Catalyzes the last two sequential reactions in the de novo biosynthetic pathway for UDP-N-acetylglucosamine (UDP-GlcNAc). The C-terminal domain catalyzes the transfer of acetyl group from acetyl coenzyme A to glucosamine-1-phosphate (GlcN-1-P) to produce N-acetylglucosamine-1-phosphate (GlcNAc-1-P), which is converted into UDP-GlcNAc by the transfer of uridine 5-monophosphate (from uridine 5-triphosphate), a reaction catalyzed by the N-terminal domain. This Deinococcus geothermalis (strain DSM 11300 / CIP 105573 / AG-3a) protein is Bifunctional protein GlmU.